The following is a 156-amino-acid chain: Small ribosomal subunit protein uS7 (156 aa).

The protein belongs to the universal ribosomal protein uS7 family. In terms of assembly, part of the 30S ribosomal subunit. Contacts proteins S9 and S11.

Functionally, one of the primary rRNA binding proteins, it binds directly to 16S rRNA where it nucleates assembly of the head domain of the 30S subunit. Is located at the subunit interface close to the decoding center, probably blocks exit of the E-site tRNA. The polypeptide is Small ribosomal subunit protein uS7 (Gloeothece citriformis (strain PCC 7424) (Cyanothece sp. (strain PCC 7424))).